We begin with the raw amino-acid sequence, 502 residues long: ATP synthase subunit alpha (502 aa).

Residue 169-176 (GDRQTGKT) coordinates ATP.

The protein belongs to the ATPase alpha/beta chains family. F-type ATPases have 2 components, CF(1) - the catalytic core - and CF(0) - the membrane proton channel. CF(1) has five subunits: alpha(3), beta(3), gamma(1), delta(1), epsilon(1). CF(0) has three main subunits: a(1), b(2) and c(9-12). The alpha and beta chains form an alternating ring which encloses part of the gamma chain. CF(1) is attached to CF(0) by a central stalk formed by the gamma and epsilon chains, while a peripheral stalk is formed by the delta and b chains.

It is found in the cell membrane. It catalyses the reaction ATP + H2O + 4 H(+)(in) = ADP + phosphate + 5 H(+)(out). Functionally, produces ATP from ADP in the presence of a proton gradient across the membrane. The alpha chain is a regulatory subunit. This Clostridium perfringens (strain SM101 / Type A) protein is ATP synthase subunit alpha.